We begin with the raw amino-acid sequence, 414 residues long: 3-oxoacyl-[acyl-carrier-protein] synthase 2 (414 aa).

One can recognise a Ketosynthase family 3 (KS3) domain in the interval 3–413 (KRRVVVTGMG…GTNGSLIFKR (411 aa)). Catalysis depends on for beta-ketoacyl synthase activity residues Cys164, His304, and His342.

It belongs to the thiolase-like superfamily. Beta-ketoacyl-ACP synthases family. In terms of assembly, homodimer.

It catalyses the reaction a fatty acyl-[ACP] + malonyl-[ACP] + H(+) = a 3-oxoacyl-[ACP] + holo-[ACP] + CO2. It carries out the reaction (9Z)-hexadecenoyl-[ACP] + malonyl-[ACP] + H(+) = 3-oxo-(11Z)-octadecenoyl-[ACP] + holo-[ACP] + CO2. Its pathway is lipid metabolism; fatty acid biosynthesis. Functionally, involved in the type II fatty acid elongation cycle. Catalyzes the elongation of a wide range of acyl-ACP by the addition of two carbons from malonyl-ACP to an acyl acceptor. Can efficiently catalyze the conversion of palmitoleoyl-ACP (cis-hexadec-9-enoyl-ACP) to cis-vaccenoyl-ACP (cis-octadec-11-enoyl-ACP), an essential step in the thermal regulation of fatty acid composition. In Vibrio cholerae serotype O1 (strain ATCC 39315 / El Tor Inaba N16961), this protein is 3-oxoacyl-[acyl-carrier-protein] synthase 2 (fabF).